Consider the following 344-residue polypeptide: MSFLSRFVCAVPRQAIFRTFSTLTGSSGCKYLPESTFNTIQKVSFCKKSAKGKDGDLKKKCAEAAKKEKEAAEKKKCAEAAKKEKEAAEKKKCAEAAKKEKEAAEKKKCAEAAKKEKEAAEKKKCAEAAKKEKEAAEKKKCAEAAKKEKEAAEKKKCAEAAKKEKEAAEKKKCAEAAQKKKCAELAKKEQEAAEKKKCAEAAKKEKEAAEKKKCEERAKKEKEAAEKKKCEERAKKEKEAAEKKKCAEAAKKEKEAAEKKKCAEAAQKKKCAELAKKAKEAAEKKKCAKKAGEKGSKQSGSDKGKKNGKKNDMKNKCAMLAKKAKEEALKKKCAAAQKKCEPKK.

A run of 12 repeats spans residues lysine 74–glutamate 89, lysine 90–glutamate 105, lysine 106–glutamate 121, lysine 122–glutamate 137, lysine 138–glutamate 153, lysine 154–glutamate 169, lysine 170–leucine 185, alanine 186–alanine 201, alanine 202–arginine 217, alanine 218–arginine 233, alanine 234–alanine 249, and alanine 250–alanine 265. A 17 X 16 AA approximate tandem repeats of K-K-K-C-X-E-X-A-[KQ]-K-X-X-E-X-A-X region spans residues lysine 74–lysine 344. The interval lysine 206–lysine 244 is disordered. The 13; approximate repeat unit spans residues alanine 266 to alanine 281. The stretch at alanine 282–lysine 297 is one 14; approximate repeat. Residues lysine 285–asparagine 315 show a composition bias toward basic and acidic residues. Residues lysine 285 to alanine 318 form a disordered region. A 15; approximate repeat occupies glutamine 298–methionine 313. The stretch at lysine 314 to leucine 329 is repeat 16. One copy of the 17; truncated repeat lies at lysine 330–lysine 344.

Testis. Located in spermatocytes and spermatid bundles.

Its subcellular location is the cytoplasm. In terms of biological role, possible structural role in the sperm tail. It is associated with axonemal structures. This Drosophila hydei (Fruit fly) protein is Axoneme-associated protein mst101(1) (mst101(1)).